A 509-amino-acid chain; its full sequence is Lysine--tRNA ligase (509 aa).

Glutamate 418 and glutamate 425 together coordinate Mg(2+).

The protein belongs to the class-II aminoacyl-tRNA synthetase family. As to quaternary structure, homodimer. Mg(2+) serves as cofactor.

It is found in the cytoplasm. It catalyses the reaction tRNA(Lys) + L-lysine + ATP = L-lysyl-tRNA(Lys) + AMP + diphosphate. This chain is Lysine--tRNA ligase (lysS), found in Acinetobacter baylyi (strain ATCC 33305 / BD413 / ADP1).